A 271-amino-acid polypeptide reads, in one-letter code: Octanoyltransferase LipM (271 aa).

The 212-residue stretch at 31–242 folds into the BPL/LPL catalytic domain; it reads GHNKPTLRFY…GLAEQFNVEF (212 aa). The Acyl-thioester intermediate role is filled by cysteine 144.

Belongs to the octanoyltransferase LipM family. In terms of assembly, monomer.

It catalyses the reaction octanoyl-[ACP] + L-lysyl-[protein] = N(6)-octanoyl-L-lysyl-[protein] + holo-[ACP] + H(+). Its pathway is protein modification; protein lipoylation via endogenous pathway; protein N(6)-(lipoyl)lysine from octanoyl-[acyl-carrier-protein]. In terms of biological role, catalyzes the transfer of endogenously produced octanoic acid from octanoyl-acyl-carrier-protein onto the lipoyl domain of GcvH, an intermediate carrier during protein lipoylation. In Clostridioides difficile (strain 630) (Peptoclostridium difficile), this protein is Octanoyltransferase LipM.